Reading from the N-terminus, the 101-residue chain is NADH-quinone oxidoreductase subunit K (101 aa).

3 helical membrane-spanning segments follow: residues 4–24 (VYDY…GIML), 29–49 (IILL…NFIA), and 61–81 (VFVF…LAIV).

Belongs to the complex I subunit 4L family. As to quaternary structure, NDH-1 is composed of 14 different subunits. Subunits NuoA, H, J, K, L, M, N constitute the membrane sector of the complex.

It localises to the cell inner membrane. It catalyses the reaction a quinone + NADH + 5 H(+)(in) = a quinol + NAD(+) + 4 H(+)(out). Functionally, NDH-1 shuttles electrons from NADH, via FMN and iron-sulfur (Fe-S) centers, to quinones in the respiratory chain. The immediate electron acceptor for the enzyme in this species is believed to be ubiquinone. Couples the redox reaction to proton translocation (for every two electrons transferred, four hydrogen ions are translocated across the cytoplasmic membrane), and thus conserves the redox energy in a proton gradient. In Legionella pneumophila (strain Paris), this protein is NADH-quinone oxidoreductase subunit K.